Reading from the N-terminus, the 531-residue chain is HERV-H LTR-associating protein 1 (531 aa).

Positions 1–29 (MLGFLSRGPSMKLCMGLACVLSLWNTVSG) are cleaved as a signal peptide. Asparagine 79, asparagine 143, and asparagine 161 each carry an N-linked (GlcNAc...) asparagine glycan. Disordered regions lie at residues 231 to 289 (GTAR…RPPE) and 340 to 362 (EKKP…GTEE). Polar residues-rich tracts occupy residues 232-269 (TART…SSPW) and 349-362 (ETRS…GTEE).

It localises to the secreted. This Homo sapiens (Human) protein is HERV-H LTR-associating protein 1 (HHLA1).